The primary structure comprises 384 residues: Mitogen-activated protein kinase 8 (384 aa).

The 296-residue stretch at 26-321 (YQNLKPIGSG…VDEALQHPYI (296 aa)) folds into the Protein kinase domain. Residues 32-40 (IGSGAQGIV) and Lys55 each bind ATP. Residue Cys116 is modified to S-nitrosocysteine. Asp151 (proton acceptor) is an active-site residue. Thr183 is modified (phosphothreonine; by MAP2K7). A TXY motif is present at residues 183–185 (TPY). Position 185 is a phosphotyrosine; by MAP2K4 (Tyr185). Ser377 is subject to Phosphoserine.

Belongs to the protein kinase superfamily. CMGC Ser/Thr protein kinase family. MAP kinase subfamily. As to quaternary structure, binds to at least four scaffolding proteins, MAPK8IP1/JIP-1, MAPK8IP2/JIP-2, MAPK8IP3/JIP-3/JSAP1 and SPAG9/MAPK8IP4/JIP-4. These proteins also bind other components of the JNK signaling pathway. Forms a complex with MAPK8IP1 and ARHGEF28. Interacts with TP53 and WWOX. Interacts with JAMP. Interacts with NFATC4. Interacts with MECOM; regulates JNK signaling. Interacts with PIN1; this interaction mediates MAPK8 conformational changes leading to the binding of MAPK8 to its substrates. Interacts with HSF1 (via D domain and preferentially with hyperphosphorylated form); this interaction occurs under both normal growth conditions and immediately upon heat shock. Interacts (phosphorylated form) with NFE2; the interaction phosphorylates NFE2 in undifferentiated cells. Interacts with GRIPAP1. Interacts with POU5F1; phosphorylates POU5F1 at 'Ser-347'. Found in a complex with SH3RF1, RAC1, MAP3K11/MLK3, MAP2K7/MKK7 and MAPK8IP1/JIP1. Found in a complex with SH3RF1, RAC2, MAP3K7/TAK1, MAP2K7/MKK7, MAPK8IP1/JIP1 and MAPK9/JNK2. Mg(2+) serves as cofactor. In terms of processing, phosphorylated by TAOK2. Dually phosphorylated on Thr-183 and Tyr-185 by MAP2K7 and MAP2K4, which activates the enzyme. May be phosphorylated at Thr-183 and Tyr-185 by MAP3K1/MEKK1. Phosphorylated form is more concentrated at synapses than none-phosphorylated. Brain (at protein level).

It localises to the cytoplasm. The protein localises to the nucleus. The protein resides in the synapse. It carries out the reaction L-seryl-[protein] + ATP = O-phospho-L-seryl-[protein] + ADP + H(+). The catalysed reaction is L-threonyl-[protein] + ATP = O-phospho-L-threonyl-[protein] + ADP + H(+). Inhibited by SERPINB3. Activated by threonine and tyrosine phosphorylation by either of two dual specificity kinases, MAP2K4 and MAP2K7. MAP2K4 shows a strong preference for Tyr-185 while MAP2K7 phosphorylates Tyr-183 preferentially. Inhibited by dual specificity phosphatases, such as DUSP1. In terms of biological role, serine/threonine-protein kinase involved in various processes such as cell proliferation, differentiation, migration, transformation and programmed cell death. Extracellular stimuli such as pro-inflammatory cytokines or physical stress stimulate the stress-activated protein kinase/c-Jun N-terminal kinase (SAP/JNK) signaling pathway. In this cascade, two dual specificity kinases MAP2K4/MKK4 and MAP2K7/MKK7 phosphorylate and activate MAPK8/JNK1. In turn, MAPK8/JNK1 phosphorylates a number of transcription factors, primarily components of AP-1 such as JUN, JDP2 and ATF2 and thus regulates AP-1 transcriptional activity. Phosphorylates the replication licensing factor CDT1, inhibiting the interaction between CDT1 and the histone H4 acetylase HBO1 to replication origins. Loss of this interaction abrogates the acetylation required for replication initiation. Promotes stressed cell apoptosis by phosphorylating key regulatory factors including p53/TP53 and Yes-associates protein YAP1. In T-cells, MAPK8 and MAPK9 are required for polarized differentiation of T-helper cells into Th1 cells. Contributes to the survival of erythroid cells by phosphorylating the antagonist of cell death BAD upon EPO stimulation. Mediates starvation-induced BCL2 phosphorylation, BCL2 dissociation from BECN1, and thus activation of autophagy. Phosphorylates STMN2 and hence regulates microtubule dynamics, controlling neurite elongation in cortical neurons. In the developing brain, through its cytoplasmic activity on STMN2, negatively regulates the rate of exit from multipolar stage and of radial migration from the ventricular zone. Phosphorylates several other substrates including heat shock factor protein 4 (HSF4), the deacetylase SIRT1, ELK1, or the E3 ligase ITCH. Phosphorylates the CLOCK-BMAL1 heterodimer and plays a role in the regulation of the circadian clock. Phosphorylates the heat shock transcription factor HSF1, suppressing HSF1-induced transcriptional activity. Phosphorylates POU5F1, which results in the inhibition of POU5F1's transcriptional activity and enhances its proteasomal degradation. Phosphorylates JUND and this phosphorylation is inhibited in the presence of MEN1. In neurons, phosphorylates SYT4 which captures neuronal dense core vesicles at synapses. Phosphorylates EIF4ENIF1/4-ET in response to oxidative stress, promoting P-body assembly. Phosphorylates SIRT6 in response to oxidative stress, stimulating its mono-ADP-ribosyltransferase activity. Phosphorylates NLRP3, promoting assembly of the NLRP3 inflammasome. Phosphorylates ALKBH5 in response to reactive oxygen species (ROS), promoting ALKBH5 sumoylation and inactivation. This is Mitogen-activated protein kinase 8 (Mapk8) from Mus musculus (Mouse).